The chain runs to 162 residues: UPF0305 protein MmarC7_1691 (162 aa).

It belongs to the UPF0305 family.

This Methanococcus maripaludis (strain C7 / ATCC BAA-1331) protein is UPF0305 protein MmarC7_1691.